Here is a 162-residue protein sequence, read N- to C-terminus: Phosphopantetheine adenylyltransferase (162 aa).

Ser9 is a binding site for substrate. ATP contacts are provided by residues 9–10 and His17; that span reads SF. 3 residues coordinate substrate: Lys41, Val77, and Lys91. ATP-binding positions include 92 to 94, Glu102, and 126 to 132; these read GLR and YAFLSSS.

Belongs to the bacterial CoaD family. As to quaternary structure, homohexamer. Requires Mg(2+) as cofactor.

The protein resides in the cytoplasm. The catalysed reaction is (R)-4'-phosphopantetheine + ATP + H(+) = 3'-dephospho-CoA + diphosphate. The protein operates within cofactor biosynthesis; coenzyme A biosynthesis; CoA from (R)-pantothenate: step 4/5. In terms of biological role, reversibly transfers an adenylyl group from ATP to 4'-phosphopantetheine, yielding dephospho-CoA (dPCoA) and pyrophosphate. This Frankia alni (strain DSM 45986 / CECT 9034 / ACN14a) protein is Phosphopantetheine adenylyltransferase.